A 342-amino-acid polypeptide reads, in one-letter code: Ferredoxin--NADP reductase (342 aa).

FAD is bound by residues C17, D36, Q44, Y49, V89, F124, D289, and T330.

It belongs to the ferredoxin--NADP reductase type 2 family. In terms of assembly, homodimer. It depends on FAD as a cofactor.

It carries out the reaction 2 reduced [2Fe-2S]-[ferredoxin] + NADP(+) + H(+) = 2 oxidized [2Fe-2S]-[ferredoxin] + NADPH. The sequence is that of Ferredoxin--NADP reductase from Rhodopseudomonas palustris (strain ATCC BAA-98 / CGA009).